Consider the following 122-residue polypeptide: Large ribosomal subunit protein uL14 (122 aa).

It belongs to the universal ribosomal protein uL14 family. As to quaternary structure, part of the 50S ribosomal subunit. Forms a cluster with proteins L3 and L19. In the 70S ribosome, L14 and L19 interact and together make contacts with the 16S rRNA in bridges B5 and B8.

Binds to 23S rRNA. Forms part of two intersubunit bridges in the 70S ribosome. This Cereibacter sphaeroides (strain ATCC 17029 / ATH 2.4.9) (Rhodobacter sphaeroides) protein is Large ribosomal subunit protein uL14.